Reading from the N-terminus, the 242-residue chain is DNA repair protein RecO (242 aa).

Belongs to the RecO family. In terms of assembly, monomer.

Involved in DNA repair and RecF pathway recombination. The polypeptide is DNA repair protein RecO (Shigella sonnei (strain Ss046)).